Here is a 300-residue protein sequence, read N- to C-terminus: Ribonuclease HIII (300 aa).

In terms of domain architecture, RNase H type-2 spans 86–300 (RPRLGVDESG…FYEICDSTDI (215 aa)). 3 residues coordinate a divalent metal cation: Asp92, Glu93, and Asp196.

The protein belongs to the RNase HII family. RnhC subfamily. Mn(2+) is required as a cofactor. It depends on Mg(2+) as a cofactor.

Its subcellular location is the cytoplasm. The enzyme catalyses Endonucleolytic cleavage to 5'-phosphomonoester.. In terms of biological role, endonuclease that specifically degrades the RNA of RNA-DNA hybrids. The protein is Ribonuclease HIII of Chlamydia abortus (strain DSM 27085 / S26/3) (Chlamydophila abortus).